The sequence spans 366 residues: Cell division protein FtsY homolog, chloroplastic (366 aa).

The transit peptide at 1–40 (MATSSAHLSFLAGRISPFSSERIGLFPLRGEFRPRMTRFR) directs the protein to the chloroplast. GTP is bound by residues 171 to 178 (GVNGGGKT), 254 to 258 (DTSGR), and 318 to 321 (TKLD).

It belongs to the GTP-binding SRP family. As to quaternary structure, monomer. Interacts with FFC/cpSRP54, a component of the cpSRP complex, composed of a FFC/cpSRP54 monomer and a CAO/cpSRP43 dimer. The complex with FFC/cpSRP54 is formed when both proteins are bound with GTP. In terms of tissue distribution, expressed in green tissues. Low levels in roots and seeds.

The protein resides in the plastid. It is found in the chloroplast stroma. The protein localises to the chloroplast thylakoid membrane. Signal recognition particle receptor protein. Binds GTP specifically. The GTPase activity is inhibited by the N-terminus of the protein until binding to the thylakoid membrane. Activates the GTPase activity of FFC/cpSRP54 when bound to the cpSRP complex. Required for light-harvesting chlorophyll a/b-binding protein (LHCP) integration into thylakoids. Might be also functionally linked to the Sec translocation machinery. The chain is Cell division protein FtsY homolog, chloroplastic (CPFTSY) from Arabidopsis thaliana (Mouse-ear cress).